Consider the following 273-residue polypeptide: HMP-PP phosphatase (273 aa).

Asp-8 acts as the Nucleophile in catalysis. Positions 8, 10, and 212 each coordinate Mg(2+).

Belongs to the HAD-like hydrolase superfamily. Cof family. Requires Mg(2+) as cofactor.

The catalysed reaction is 4-amino-2-methyl-5-(diphosphooxymethyl)pyrimidine + H2O = 4-amino-2-methyl-5-(phosphooxymethyl)pyrimidine + phosphate + H(+). Functionally, catalyzes the hydrolysis of 4-amino-2-methyl-5-hydroxymethylpyrimidine pyrophosphate (HMP-PP) to 4-amino-2-methyl-5-hydroxymethylpyrimidine phosphate (HMP-P). This Yersinia pestis bv. Antiqua (strain Antiqua) protein is HMP-PP phosphatase.